The following is a 1284-amino-acid chain: MEGSEAAQQKDSVKVVVNIRPLITPELLLGCTDCVTVTPGEPQVQIGPHVFTYDHVFGSTGSPSSLIFEQCVHPLIDSLFRGYNATVLAYGQTGSGKTYTMGTNYTGEANCGGIIPQVMETIFKKADALKDGTEFLIRVSFIEIFKEEVFDLLDASHAALRLDSGSVAKATAPARVPIQIRETGNGGITLAGVTEAEVKTKEEMASFLARGSSSRATGSTNMNSQSSRSHAIFTISMDQKKTSSASDKLSNDDYDILSSKFHLVDLAGSERAKRTGADGLRLKEGIHINRGLLALGNVISALGDEKKRKEGAFVPYRDSKLTRLLQDSLGGNSKTAMIACISPADSNAEETINTLKYANRARNIQNKAVVWSFSLKINRDPVTAEMQKLRSQLEQLQTELLFSRSGSAALEELQLLQQKVSLLELKNSELNHELKERELSYEQLAQSALAAQLEKDQLMLKIESARNGKSWDDIENTDTDQDVEVMKRYILKIQQLESELTRQKFSSTCKNDLHDRFAMDKDLLLDDLGSGCEVGTPDASSAVNFRITPVPAGEADEEKERDHSSMQDKLDKELQELDKRLQQKEAEMKEFAKSDTSVLKQHYEKKLNEMEQEKKALQKEIEELRHALTNITSSTDESAQKLKENYLQKLNTLESQVSELKKKQEAQQQLIRQKQRSDEAAKRLQEDIHRIKSQKVQLQQKIKQESEQFRSWKAAREKEVLQLKKEGRRNEYEMHKLLALNQRQKMVLQRKTEEAAMATKRLKESLEAKKSTRDTYGSASGSGIQALMRAIDDELEVTVRAYELRSHYERQMQERAAISKEIAKLKECPQAMSPSARSSRISALENMLSSSSSAMVSMASQLSEAEERERAFNGKGRWNHVRSLPDAKNTMNYLFQLASSSRCQQLDKEVMCKEKEHLICDLKEKVVALNGRIRQLETQVKDLNNQNMLLFTAISEAKNPVGTSRKGTVGSEDGQHYAMRKSIRASHSLHYSKNSFLWSDDMDISDSEKSEGSDADWEASDADYGASDADWECSKKVRRRRQTVSSHLNPNPGSGTTQKSAKSEMASQEKSTSLDLAPQCCSCSKYSSCKTQKCECRASGSHCGGDCGCITSRCSNRVDMKEEKEGGGVVEVSSSDDVDDAKVQEIVKEGVMLLENSMSEKEAQETKSRKPLADIGNGVVKQTGAKPKQRKNWRKSTVQLVPSAPPLPPTAPQNTEPVPRNRDIPLRLPRAMSSPAVDSIPLTDRNAAKPDESMSSNKENVTAVRARSPARPRKNANEKENHLR.

In terms of domain architecture, Kinesin motor spans 12–364; sequence SVKVVVNIRP…LKYANRARNI (353 aa). 91–98 contributes to the ATP binding site; sequence GQTGSGKT. 3 coiled-coil regions span residues 407-445, 561-711, and 911-950; these read SAAL…EQLA, RDHS…QFRS, and MCKE…NMLL. Disordered stretches follow at residues 1040 to 1070 and 1158 to 1284; these read RRQT…SQEK and MSEK…NHLR. The span at 1043–1070 shows a compositional bias: polar residues; it reads TVSSHLNPNPGSGTTQKSAKSEMASQEK. Composition is skewed to basic and acidic residues over residues 1158–1172 and 1275–1284; these read MSEK…RKPL and NANEKENHLR.

This sequence belongs to the TRAFAC class myosin-kinesin ATPase superfamily. Kinesin family. KIN-4 subfamily. As to quaternary structure, homodimer.

Functionally, microtubule-dependent motor protein involved in the control of the oriented deposition of cellulose microfibrils. This Oryza sativa subsp. japonica (Rice) protein is Kinesin-like protein KIN-4C.